The primary structure comprises 239 residues: Cytochrome c oxidase subunit 2 (239 aa).

Residues Met-1–His-26 lie on the Mitochondrial intermembrane side of the membrane. The chain crosses the membrane as a helical span at residues Val-27–Ser-48. Residues Lys-49–Glu-62 lie on the Mitochondrial matrix side of the membrane. A helical membrane pass occupies residues Thr-63–Lys-82. Over Leu-83–Arg-239 the chain is Mitochondrial intermembrane. Cu cation is bound by residues His-161, Cys-196, Glu-198, Cys-200, His-204, and Met-207. Residue Glu-198 participates in Mg(2+) binding.

The protein belongs to the cytochrome c oxidase subunit 2 family. Component of the cytochrome c oxidase (complex IV, CIV), a multisubunit enzyme composed of a catalytic core of 3 subunits and several supernumerary subunits. The complex exists as a monomer or a dimer and forms supercomplexes (SCs) in the inner mitochondrial membrane with ubiquinol-cytochrome c oxidoreductase (cytochrome b-c1 complex, complex III, CIII). Requires Cu cation as cofactor.

Its subcellular location is the mitochondrion inner membrane. The catalysed reaction is 4 Fe(II)-[cytochrome c] + O2 + 8 H(+)(in) = 4 Fe(III)-[cytochrome c] + 2 H2O + 4 H(+)(out). Its function is as follows. Component of the cytochrome c oxidase, the last enzyme in the mitochondrial electron transport chain which drives oxidative phosphorylation. The respiratory chain contains 3 multisubunit complexes succinate dehydrogenase (complex II, CII), ubiquinol-cytochrome c oxidoreductase (cytochrome b-c1 complex, complex III, CIII) and cytochrome c oxidase (complex IV, CIV), that cooperate to transfer electrons derived from NADH and succinate to molecular oxygen, creating an electrochemical gradient over the inner membrane that drives transmembrane transport and the ATP synthase. Cytochrome c oxidase is the component of the respiratory chain that catalyzes the reduction of oxygen to water. Electrons originating from reduced cytochrome c in the intermembrane space (IMS) are transferred via the dinuclear copper A center (CU(A)) of subunit 2 and heme A of subunit 1 to the active site in subunit 1, a binuclear center (BNC) formed by heme A3 and copper B (CU(B)). The BNC reduces molecular oxygen to 2 water molecules using 4 electrons from cytochrome c in the IMS and 4 protons from the mitochondrial matrix. This is Cytochrome c oxidase subunit 2 (COII) from Branchiostoma lanceolatum (Common lancelet).